Here is a 169-residue protein sequence, read N- to C-terminus: Probable RNA-binding protein EIF1AD (169 aa).

The S1-like domain occupies Val-14–Tyr-89. Residues Ala-115–Asn-169 form a disordered region. Over residues Asp-156 to Asn-169 the composition is skewed to acidic residues.

The protein belongs to the EIF1AD family.

The protein resides in the nucleus. May play a role into cellular response to oxidative stress. May decrease cell proliferation. The sequence is that of Probable RNA-binding protein EIF1AD (eif1ad) from Xenopus laevis (African clawed frog).